The primary structure comprises 265 residues: MRVERVLLKDYTTLGVGGPAELWTVETREELKRATEAPYRVLGNGSNLLVLDEGVPERVIRLAGEFQTYDLKGWVGAGTLLPLLVQEAARAGLSGLEGLLGIPAQVGGAVKMNAGTRFGEMADALEAVEVFHDGAFHVYCPEELGFGYRKSHLPPGGIVTRVRLKLKERPKEEILRRMAEVDRARKGQPKRKSAGCAFKNPPGQSAGRLIDERGLKGLRVGDAMISLEHGNFIVNLGQARAKDVLELVRRVQEELPLELEWEVWP.

The region spanning 15–169 (GVGGPAELWT…TRVRLKLKER (155 aa)) is the FAD-binding PCMH-type domain. Residue R149 is part of the active site. The segment at 182-203 (DRARKGQPKRKSAGCAFKNPPG) is disordered. The active-site Proton donor is C196.

Belongs to the MurB family. The cofactor is FAD.

It localises to the cytoplasm. It carries out the reaction UDP-N-acetyl-alpha-D-muramate + NADP(+) = UDP-N-acetyl-3-O-(1-carboxyvinyl)-alpha-D-glucosamine + NADPH + H(+). Its pathway is cell wall biogenesis; peptidoglycan biosynthesis. In terms of biological role, cell wall formation. The protein is UDP-N-acetylenolpyruvoylglucosamine reductase of Thermus thermophilus (strain ATCC 27634 / DSM 579 / HB8).